The sequence spans 244 residues: Glucosamine-6-phosphate deaminase (244 aa).

The active-site Proton acceptor; for enolization step is aspartate 67. The active-site For ring-opening step is the asparagine 133. Histidine 135 (proton acceptor; for ring-opening step) is an active-site residue. Catalysis depends on glutamate 140, which acts as the For ring-opening step.

It belongs to the glucosamine/galactosamine-6-phosphate isomerase family. NagB subfamily.

It carries out the reaction alpha-D-glucosamine 6-phosphate + H2O = beta-D-fructose 6-phosphate + NH4(+). Its pathway is amino-sugar metabolism; N-acetylneuraminate degradation; D-fructose 6-phosphate from N-acetylneuraminate: step 5/5. In terms of biological role, catalyzes the reversible isomerization-deamination of glucosamine 6-phosphate (GlcN6P) to form fructose 6-phosphate (Fru6P) and ammonium ion. The chain is Glucosamine-6-phosphate deaminase from Mycoplasma mycoides subsp. mycoides SC (strain CCUG 32753 / NCTC 10114 / PG1).